We begin with the raw amino-acid sequence, 321 residues long: Tetraacyldisaccharide 4'-kinase (321 aa).

54–61 (SVGGTGKT) lines the ATP pocket.

The protein belongs to the LpxK family.

The enzyme catalyses a lipid A disaccharide + ATP = a lipid IVA + ADP + H(+). Its pathway is glycolipid biosynthesis; lipid IV(A) biosynthesis; lipid IV(A) from (3R)-3-hydroxytetradecanoyl-[acyl-carrier-protein] and UDP-N-acetyl-alpha-D-glucosamine: step 6/6. Transfers the gamma-phosphate of ATP to the 4'-position of a tetraacyldisaccharide 1-phosphate intermediate (termed DS-1-P) to form tetraacyldisaccharide 1,4'-bis-phosphate (lipid IVA). The sequence is that of Tetraacyldisaccharide 4'-kinase from Rickettsia typhi (strain ATCC VR-144 / Wilmington).